The following is a 525-amino-acid chain: Cysteine--tRNA ligase (525 aa).

Cys-49 is a Zn(2+) binding site. The 'HIGH' region signature appears at 51 to 61 (VTVYDLCHLGH). Zn(2+) contacts are provided by Cys-258, His-283, and Glu-287. A 'KMSKS' region motif is present at residues 315–319 (KMSKS). An ATP-binding site is contributed by Lys-318.

The protein belongs to the class-I aminoacyl-tRNA synthetase family. Monomer. It depends on Zn(2+) as a cofactor.

The protein resides in the cytoplasm. The catalysed reaction is tRNA(Cys) + L-cysteine + ATP = L-cysteinyl-tRNA(Cys) + AMP + diphosphate. The chain is Cysteine--tRNA ligase from Synechococcus sp. (strain JA-2-3B'a(2-13)) (Cyanobacteria bacterium Yellowstone B-Prime).